Consider the following 310-residue polypeptide: Tryptophan 2,3-dioxygenase (310 aa).

A disordered region spans residues Met-1 to Ala-39. Substrate-binding positions include Phe-79–His-83, Tyr-141, and Arg-145. Position 268 (His-268) interacts with heme. Thr-282 is a binding site for substrate.

The protein belongs to the tryptophan 2,3-dioxygenase family. Homotetramer. Heme is required as a cofactor.

It carries out the reaction L-tryptophan + O2 = N-formyl-L-kynurenine. It functions in the pathway amino-acid degradation; L-tryptophan degradation via kynurenine pathway; L-kynurenine from L-tryptophan: step 1/2. Its function is as follows. Heme-dependent dioxygenase that catalyzes the oxidative cleavage of the L-tryptophan (L-Trp) pyrrole ring and converts L-tryptophan to N-formyl-L-kynurenine. Catalyzes the oxidative cleavage of the indole moiety. The sequence is that of Tryptophan 2,3-dioxygenase from Burkholderia multivorans (strain ATCC 17616 / 249).